A 1406-amino-acid chain; its full sequence is DNA topoisomerase 2 (1406 aa).

ATP is bound by residues Asn-69, Asn-98, 126–128 (SSN), and 139–146 (GRNGYGAK). The interval 332–334 (KKK) is interaction with DNA. An ATP-binding site is contributed by 363–365 (QTK). A Toprim domain is found at 441-555 (CTLILTEGDS…GLLDIPGFLI (115 aa)). Residues Glu-447, Asp-524, and Asp-526 each contribute to the Mg(2+) site. The Topo IIA-type catalytic domain maps to 690–1159 (IPSVLDGFKP…SAKDLWNNDL (470 aa)). Catalysis depends on Tyr-780, which acts as the O-(5'-phospho-DNA)-tyrosine intermediate. An interaction with DNA region spans residues 963-972 (KLISPISLQN). Over residues 1079-1089 (EDEDEDLEESE) the composition is skewed to acidic residues. 4 disordered regions span residues 1079–1106 (EDED…VNGP), 1183–1215 (KTKG…KKIK), 1230–1287 (KIKA…DESG), and 1303–1406 (DEDA…FNDE). A compositionally biased stretch (basic and acidic residues) spans 1090–1100 (EATRKKDKDDE). The segment covering 1204–1214 (KKKPARRIKKI) has biased composition (basic residues). The segment covering 1261-1274 (DVTSNASTPSTTIF) has biased composition (polar residues). The span at 1326–1336 (AKKKAPPKRKA) shows a compositional bias: basic residues. Composition is skewed to acidic residues over residues 1341–1359 (SSED…DEEV) and 1381–1406 (EISD…FNDE).

This sequence belongs to the type II topoisomerase family. As to quaternary structure, homodimer. The cofactor is Mg(2+). Requires Mn(2+) as cofactor. It depends on Ca(2+) as a cofactor.

Its subcellular location is the nucleus. It catalyses the reaction ATP-dependent breakage, passage and rejoining of double-stranded DNA.. Functionally, control of topological states of DNA by transient breakage and subsequent rejoining of DNA strands. Topoisomerase II makes double-strand breaks. The protein is DNA topoisomerase 2 (TOP2) of Candida glabrata (strain ATCC 2001 / BCRC 20586 / JCM 3761 / NBRC 0622 / NRRL Y-65 / CBS 138) (Yeast).